Consider the following 131-residue polypeptide: Protein ApaG (131 aa).

An ApaG domain is found at 7-131; that stretch reads PVKPYDLTVS…FLLAMPRTLH (125 aa).

The polypeptide is Protein ApaG (Bordetella bronchiseptica (strain ATCC BAA-588 / NCTC 13252 / RB50) (Alcaligenes bronchisepticus)).